Consider the following 261-residue polypeptide: Putative hydro-lyase Sfum_3393 (261 aa).

This sequence belongs to the D-glutamate cyclase family.

The polypeptide is Putative hydro-lyase Sfum_3393 (Syntrophobacter fumaroxidans (strain DSM 10017 / MPOB)).